The sequence spans 380 residues: Cytochrome b (380 aa).

Helical transmembrane passes span 34–54, 78–99, 114–134, and 179–199; these read FGSLLGLCLVTQILTGLLLAT, WLIRNLHANGASFFFICIYLHI, WNTGILLLLTLMATAFVGYVL, and FFALHFLLPFMIAGLTLIHLT. 2 residues coordinate heme b: His-84 and His-98. Heme b-binding residues include His-183 and His-197. Residue His-202 coordinates a ubiquinone. The next 4 membrane-spanning stretches (helical) occupy residues 227-247, 289-309, 321-341, and 348-368; these read LKDTLGFMFMLFLLTTLALFS, LGGVLALAASVLILFLSPLLH, FSQFLFWLLIANLLILTWVGS, and FIIIGQLASLTYFTILLILLP.

This sequence belongs to the cytochrome b family. The cytochrome bc1 complex contains 11 subunits: 3 respiratory subunits (MT-CYB, CYC1 and UQCRFS1), 2 core proteins (UQCRC1 and UQCRC2) and 6 low-molecular weight proteins (UQCRH/QCR6, UQCRB/QCR7, UQCRQ/QCR8, UQCR10/QCR9, UQCR11/QCR10 and a cleavage product of UQCRFS1). This cytochrome bc1 complex then forms a dimer. Heme b is required as a cofactor.

It localises to the mitochondrion inner membrane. Functionally, component of the ubiquinol-cytochrome c reductase complex (complex III or cytochrome b-c1 complex) that is part of the mitochondrial respiratory chain. The b-c1 complex mediates electron transfer from ubiquinol to cytochrome c. Contributes to the generation of a proton gradient across the mitochondrial membrane that is then used for ATP synthesis. The sequence is that of Cytochrome b (MT-CYB) from Garrodia nereis (Grey-backed storm-petrel).